The primary structure comprises 447 residues: Glutamyl-tRNA reductase (447 aa).

Substrate is bound by residues 56–59, serine 119, 124–126, and glutamine 130; these read TCNR and ETQ. Cysteine 57 serves as the catalytic Nucleophile. 201–206 provides a ligand contact to NADP(+); it reads GLGEMS.

The protein belongs to the glutamyl-tRNA reductase family. As to quaternary structure, homodimer.

The enzyme catalyses (S)-4-amino-5-oxopentanoate + tRNA(Glu) + NADP(+) = L-glutamyl-tRNA(Glu) + NADPH + H(+). It participates in porphyrin-containing compound metabolism; protoporphyrin-IX biosynthesis; 5-aminolevulinate from L-glutamyl-tRNA(Glu): step 1/2. Its function is as follows. Catalyzes the NADPH-dependent reduction of glutamyl-tRNA(Glu) to glutamate 1-semialdehyde (GSA). The polypeptide is Glutamyl-tRNA reductase (Helicobacter acinonychis (strain Sheeba)).